The following is a 319-amino-acid chain: Iron-sulfur cluster transfer protein NUBPL (319 aa).

The N-terminal 38 residues, 1 to 38, are a transit peptide targeting the mitochondrion; that stretch reads MGTWRRLLLFGGVSLRGGGAATVPPRGCRALGCGRQLL. Residue 75-82 coordinates ATP; it reads GKGGVGKS.

The protein belongs to the Mrp/NBP35 ATP-binding proteins family. Requires [4Fe-4S] cluster as cofactor.

The protein resides in the mitochondrion. Functionally, iron-sulfur cluster transfer protein involved in the assembly of the mitochondrial membrane respiratory chain NADH dehydrogenase (Complex I). May deliver one or more Fe-S clusters to complex I subunits. The sequence is that of Iron-sulfur cluster transfer protein NUBPL (Nubpl) from Mus musculus (Mouse).